We begin with the raw amino-acid sequence, 391 residues long: Histamine H4 receptor (391 aa).

The Extracellular portion of the chain corresponds to M1–A19. The N-linked (GlcNAc...) asparagine glycan is linked to N5. A helical transmembrane segment spans residues F20 to F40. The Cytoplasmic segment spans residues V41–Y52. The chain crosses the membrane as a helical span at residues F53–I73. Residues P74–C87 are Extracellular-facing. A disulfide bond links C87 and C166. A helical membrane pass occupies residues M88–I108. The Cytoplasmic segment spans residues S109 to K131. A helical transmembrane segment spans residues I132–L152. Residues A153–W174 lie on the Extracellular side of the membrane. N159 carries an N-linked (GlcNAc...) asparagine glycan. The helical transmembrane segment at Y175 to F195 threads the bilayer. Residues S196 to S306 lie on the Cytoplasmic side of the membrane. Residues L307–V327 traverse the membrane as a helical segment. The Extracellular segment spans residues L328–S343. Residues I344–H364 traverse the membrane as a helical segment. The Cytoplasmic segment spans residues R365 to S391.

It belongs to the G-protein coupled receptor 1 family. As to quaternary structure, interacts with TSPAN4.

The protein localises to the cell membrane. Its function is as follows. The H4 subclass of histamine receptors could mediate the histamine signals in peripheral tissues. Displays a significant level of constitutive activity (spontaneous activity in the absence of agonist). This chain is Histamine H4 receptor (Hrh4), found in Rattus norvegicus (Rat).